A 141-amino-acid polypeptide reads, in one-letter code: Nucleoside diphosphate kinase (141 aa).

Residues Lys11, Phe59, Arg87, Thr93, Arg104, and Asn114 each coordinate ATP. The active-site Pros-phosphohistidine intermediate is the His117.

The protein belongs to the NDK family. In terms of assembly, homotetramer. It depends on Mg(2+) as a cofactor.

The protein localises to the cytoplasm. The enzyme catalyses a 2'-deoxyribonucleoside 5'-diphosphate + ATP = a 2'-deoxyribonucleoside 5'-triphosphate + ADP. The catalysed reaction is a ribonucleoside 5'-diphosphate + ATP = a ribonucleoside 5'-triphosphate + ADP. Functionally, major role in the synthesis of nucleoside triphosphates other than ATP. The ATP gamma phosphate is transferred to the NDP beta phosphate via a ping-pong mechanism, using a phosphorylated active-site intermediate. This Neisseria gonorrhoeae (strain NCCP11945) protein is Nucleoside diphosphate kinase.